A 670-amino-acid polypeptide reads, in one-letter code: Carnitine O-acetyltransferase, mitochondrial (670 aa).

The Proton acceptor role is filled by His-378. Residues Lys-461 and 465–472 each bind CoA; that span reads KRHGMSPD. Tyr-494 provides a ligand contact to (R)-carnitine. A CoA-binding site is contributed by Ser-498. Residue Thr-507 coordinates (R)-carnitine. Gln-597 contacts CoA. Residues 668 to 670 carry the Microbody targeting signal motif; that stretch reads AKL.

This sequence belongs to the carnitine/choline acetyltransferase family.

It localises to the mitochondrion inner membrane. The protein localises to the peroxisome. The catalysed reaction is (R)-carnitine + acetyl-CoA = O-acetyl-(R)-carnitine + CoA. Its function is as follows. Carnitine acetylase is specific for short chain fatty acids. Carnitine acetylase seems to affect the flux through the pyruvate dehydrogenase complex. It may be involved as well in the transport of acetyl-CoA into mitochondria. This is Carnitine O-acetyltransferase, mitochondrial (CAT2) from Saccharomyces cerevisiae (strain ATCC 204508 / S288c) (Baker's yeast).